Consider the following 255-residue polypeptide: Flagellar L-ring protein (255 aa).

A signal peptide spans 1-25 (MRRHSTRKTVARVAVVALAVGVLAG). Cysteine 26 carries the N-palmitoyl cysteine lipid modification. Cysteine 26 carries S-diacylglycerol cysteine lipidation.

The protein belongs to the FlgH family. The basal body constitutes a major portion of the flagellar organelle and consists of four rings (L,P,S, and M) mounted on a central rod.

It is found in the cell outer membrane. The protein resides in the bacterial flagellum basal body. Functionally, assembles around the rod to form the L-ring and probably protects the motor/basal body from shearing forces during rotation. The protein is Flagellar L-ring protein of Rhodospirillum rubrum (strain ATCC 11170 / ATH 1.1.1 / DSM 467 / LMG 4362 / NCIMB 8255 / S1).